Here is a 150-residue protein sequence, read N- to C-terminus: Dual specificity protein phosphatase 23 (150 aa).

Residues 7–150 (NFSWVLPGRL…AVFQFYQRTK (144 aa)) form the Tyrosine-protein phosphatase domain. C95 acts as the Phosphocysteine intermediate in catalysis.

Belongs to the protein-tyrosine phosphatase family. Non-receptor class dual specificity subfamily. As to expression, widely expressed. Highly expressed in spleen, prostate, colon, adrenal gland, mammary gland, thyroid and trachea. Expressed at lower level in uterus, small intestine, bladder, bone marrow, brain, spinal cord and stomach.

The protein resides in the cytoplasm. The protein localises to the cytosol. It localises to the nucleus. The catalysed reaction is O-phospho-L-tyrosyl-[protein] + H2O = L-tyrosyl-[protein] + phosphate. It catalyses the reaction O-phospho-L-seryl-[protein] + H2O = L-seryl-[protein] + phosphate. The enzyme catalyses O-phospho-L-threonyl-[protein] + H2O = L-threonyl-[protein] + phosphate. In terms of biological role, protein phosphatase that mediates dephosphorylation of proteins phosphorylated on Tyr and Ser/Thr residues. In vitro, it can dephosphorylate p44-ERK1 (MAPK3) but not p54 SAPK-beta (MAPK10) in vitro. Able to enhance activation of JNK and p38 (MAPK14). In Homo sapiens (Human), this protein is Dual specificity protein phosphatase 23 (DUSP23).